We begin with the raw amino-acid sequence, 314 residues long: Dihydroorotate dehydrogenase (fumarate) (314 aa).

Substrate contacts are provided by residues K46, 70–74, and N130; that span reads NSMGL. 46 to 47 is an FMN binding site; it reads KS. An FMN-binding site is contributed by N130. Residues S132 and C133 each act as nucleophile in the active site. 2 residues coordinate FMN: K167 and I195. 196–197 contributes to the substrate binding site; the sequence is NS. FMN is bound by residues G224, 252-253, and 274-275; these read GG and GT.

The protein belongs to the dihydroorotate dehydrogenase family. Type 1 subfamily. Homodimer. It depends on FMN as a cofactor.

The protein localises to the cytoplasm. The catalysed reaction is (S)-dihydroorotate + fumarate = orotate + succinate. It functions in the pathway pyrimidine metabolism; UMP biosynthesis via de novo pathway. Its activity is regulated as follows. The activity is independent of the presence of oxygen. Catalyzes the conversion of dihydroorotate to orotate with fumarate as the electron acceptor. The protein is Dihydroorotate dehydrogenase (fumarate) (URA1) of Lachancea kluyveri (strain ATCC 58438 / CBS 3082 / BCRC 21498 / NBRC 1685 / JCM 7257 / NCYC 543 / NRRL Y-12651) (Yeast).